Here is a 572-residue protein sequence, read N- to C-terminus: Protein misato homolog 1 (572 aa).

The protein belongs to the misato family.

Its subcellular location is the mitochondrion outer membrane. It is found in the cytoplasm. Involved in the regulation of mitochondrial distribution and morphology. Required for mitochondrial fusion and mitochondrial network formation. This is Protein misato homolog 1 (MSTO1) from Bos taurus (Bovine).